The sequence spans 317 residues: Transaldolase (317 aa).

The Schiff-base intermediate with substrate role is filled by K125.

The protein belongs to the transaldolase family. Type 1 subfamily. As to quaternary structure, homodimer.

The protein localises to the cytoplasm. The catalysed reaction is D-sedoheptulose 7-phosphate + D-glyceraldehyde 3-phosphate = D-erythrose 4-phosphate + beta-D-fructose 6-phosphate. It functions in the pathway carbohydrate degradation; pentose phosphate pathway; D-glyceraldehyde 3-phosphate and beta-D-fructose 6-phosphate from D-ribose 5-phosphate and D-xylulose 5-phosphate (non-oxidative stage): step 2/3. Its function is as follows. Transaldolase is important for the balance of metabolites in the pentose-phosphate pathway. In Delftia acidovorans (strain DSM 14801 / SPH-1), this protein is Transaldolase.